Here is a 388-residue protein sequence, read N- to C-terminus: Na(+)/H(+) antiporter NhaA (388 aa).

Over 1–11 (MKHLHRFFSSD) the chain is Cytoplasmic. The chain crosses the membrane as a helical span at residues 12-31 (ASGGIILIIAAVLAMIMANS). Topologically, residues 32-58 (GATSGWYHDFLETPVQLRVGTLEINKN) are periplasmic. The helical transmembrane segment at 59 to 80 (MLLWINDALMAVFFLLVGLEVK) threads the bilayer. Residues 81–96 (RELMQGSLASLRQAAF) are Cytoplasmic-facing. The chain crosses the membrane as a helical span at residues 97–116 (PVIAAIGGMIVPALLYLAFN). The Periplasmic segment spans residues 117-122 (YADPIT). Residues 123–130 (REGWAIPA) form a helical membrane-spanning segment. The Cytoplasmic segment spans residues 131-154 (ATDIAFALGVLALLGSRVPLALKI). A helical membrane pass occupies residues 155-176 (FLMALAIIDDLGAIIIIALFYT). The Periplasmic segment spans residues 177-180 (NDLS). The helical transmembrane segment at 181–200 (MASLGVAAVAIAVLAVLNLC) threads the bilayer. At 201–204 (GVRR) the chain is on the cytoplasmic side. A helical transmembrane segment spans residues 205–222 (TGVYILVGVVLWTAVLKS). A topological domain (periplasmic) is located at residue G223. Residues 224–236 (VHATLAGVIVGFF) form a helical membrane-spanning segment. Residues 237-253 (IPLKEKHGRSPAKRLEH) are Cytoplasmic-facing. A helical membrane pass occupies residues 254 to 272 (VLHPWVAYLILPLFAFANA). The Periplasmic segment spans residues 273 to 286 (GVSLQGVTLEGLTS). A helical transmembrane segment spans residues 287–310 (ILPLGIIAGLLIGKPLGISLFCWL). The Cytoplasmic segment spans residues 311 to 339 (ALRLKLAHLPEGTTYQQIMAVGILCGIGF). Residues 340-350 (TMSIFIASLAF) form a helical membrane-spanning segment. The Periplasmic segment spans residues 351–357 (GSVDPEL). Residues 358–380 (INWAKLGILVGSISSAVIGYSWL) traverse the membrane as a helical segment. The Cytoplasmic segment spans residues 381–388 (RVRLRPSV).

The protein belongs to the NhaA Na(+)/H(+) (TC 2.A.33) antiporter family.

It is found in the cell inner membrane. The enzyme catalyses Na(+)(in) + 2 H(+)(out) = Na(+)(out) + 2 H(+)(in). Functionally, na(+)/H(+) antiporter that extrudes sodium in exchange for external protons. In Escherichia coli O6:K15:H31 (strain 536 / UPEC), this protein is Na(+)/H(+) antiporter NhaA.